Consider the following 1133-residue polypeptide: Lon protease homolog, mitochondrial (1133 aa).

A mitochondrion-targeting transit peptide spans 1–37 (MLRTRTTKTLSTVARTTRAIQYYRSIAKTAAVSQRRF). Residues 38 to 98 (ASTLTVRDVE…ATNSGKSILA (61 aa)) constitute a propeptide, removed in mature form; by autocatalysis. Composition is skewed to basic and acidic residues over residues 98 to 117 (AKDD…VPDE) and 125 to 143 (EPTR…EASK). Disordered regions lie at residues 98-176 (AKDD…KDVP) and 282-358 (ELFP…LDDI). A compositionally biased stretch (low complexity) spans 145 to 166 (SRSSASGGGQSSSSRSDSGDGS). The Lon N-terminal domain maps to 182–480 (MLALPIARRP…KSLLVLKKEL (299 aa)). Composition is skewed to basic and acidic residues over residues 282-301 (ELFP…KDTD) and 325-340 (KLED…SELQ). Over residues 348–358 (TEEESEELDDI) the composition is skewed to acidic residues. 632-639 (GPPGVGKT) is an ATP binding site. Residues 839–892 (KKLSIEDSPTSSADSKPKESVSSEEKAENNAKSSSEKTKDNNSEKTSDDIEALK) are dispensable for catalytic activity. The segment at 844–889 (EDSPTSSADSKPKESVSSEEKAENNAKSSSEKTKDNNSEKTSDDIE) is disordered. The segment covering 853–889 (SKPKESVSSEEKAENNAKSSSEKTKDNNSEKTSDDIE) has biased composition (basic and acidic residues). The 187-residue stretch at 923-1109 (TTPPGVVMGL…NDIFQKLFKD (187 aa)) folds into the Lon proteolytic domain. Residues serine 1015 and lysine 1058 contribute to the active site.

This sequence belongs to the peptidase S16 family. Homohexamer. Organized in a ring with a central cavity. The ATP-binding and proteolytic domains (AP-domain) form a hexameric chamber. Oligomerization is independent of its proteolytic activity and the autocatalytic maturation of its subunits.

The protein resides in the mitochondrion matrix. It carries out the reaction Hydrolysis of proteins in presence of ATP.. Its function is as follows. ATP-dependent serine protease that mediates the selective degradation of misfolded, unassembled or oxidatively damaged polypeptides as well as certain short-lived regulatory proteins in the mitochondrial matrix. May also have a chaperone function in the assembly of inner membrane protein complexes. Participates in the regulation of mitochondrial gene expression and in the maintenance of the integrity of the mitochondrial genome. Binds to mitochondrial DNA in a site-specific manner. Endogenous substrates include ABF2, ACO2, ILV1, ILV2, LSC1, LYS4, MGM101 and several oxidized proteins. The 2 nucleic acid-binding proteins ABF2 and MGM101 are protected from degradation by PIM1 when they are bound to DNA. This is Lon protease homolog, mitochondrial from Saccharomyces cerevisiae (strain ATCC 204508 / S288c) (Baker's yeast).